The following is a 156-amino-acid chain: Endoribonuclease YbeY (156 aa).

The Zn(2+) site is built by H122, H126, and H132.

Belongs to the endoribonuclease YbeY family. It depends on Zn(2+) as a cofactor.

It is found in the cytoplasm. Functionally, single strand-specific metallo-endoribonuclease involved in late-stage 70S ribosome quality control and in maturation of the 3' terminus of the 16S rRNA. This chain is Endoribonuclease YbeY, found in Bacillus cereus (strain ATCC 10987 / NRS 248).